The chain runs to 232 residues: Large ribosomal subunit protein uL1 (232 aa).

Belongs to the universal ribosomal protein uL1 family. Part of the 50S ribosomal subunit.

Functionally, binds directly to 23S rRNA. The L1 stalk is quite mobile in the ribosome, and is involved in E site tRNA release. Its function is as follows. Protein L1 is also a translational repressor protein, it controls the translation of the L11 operon by binding to its mRNA. The polypeptide is Large ribosomal subunit protein uL1 (Xanthobacter autotrophicus (strain ATCC BAA-1158 / Py2)).